A 284-amino-acid chain; its full sequence is 2,3,4,5-tetrahydropyridine-2,6-dicarboxylate N-succinyltransferase (284 aa).

Positions 111 and 148 each coordinate substrate.

Belongs to the transferase hexapeptide repeat family. As to quaternary structure, homotrimer.

It is found in the cytoplasm. The catalysed reaction is (S)-2,3,4,5-tetrahydrodipicolinate + succinyl-CoA + H2O = (S)-2-succinylamino-6-oxoheptanedioate + CoA. It participates in amino-acid biosynthesis; L-lysine biosynthesis via DAP pathway; LL-2,6-diaminopimelate from (S)-tetrahydrodipicolinate (succinylase route): step 1/3. In Brucella anthropi (strain ATCC 49188 / DSM 6882 / CCUG 24695 / JCM 21032 / LMG 3331 / NBRC 15819 / NCTC 12168 / Alc 37) (Ochrobactrum anthropi), this protein is 2,3,4,5-tetrahydropyridine-2,6-dicarboxylate N-succinyltransferase.